Consider the following 395-residue polypeptide: Phosphoglycerate kinase (395 aa).

Substrate contacts are provided by residues 21 to 23, R36, 59 to 62, R120, and R153; these read DFN and HLGR. ATP contacts are provided by residues K203, E325, and 351-354; that span reads GGDS.

The protein belongs to the phosphoglycerate kinase family. In terms of assembly, monomer.

Its subcellular location is the cytoplasm. The enzyme catalyses (2R)-3-phosphoglycerate + ATP = (2R)-3-phospho-glyceroyl phosphate + ADP. The protein operates within carbohydrate degradation; glycolysis; pyruvate from D-glyceraldehyde 3-phosphate: step 2/5. This chain is Phosphoglycerate kinase, found in Roseiflexus castenholzii (strain DSM 13941 / HLO8).